The following is a 49-amino-acid chain: Large ribosomal subunit protein bL33 (49 aa).

It belongs to the bacterial ribosomal protein bL33 family.

The sequence is that of Large ribosomal subunit protein bL33 from Natranaerobius thermophilus (strain ATCC BAA-1301 / DSM 18059 / JW/NM-WN-LF).